The following is a 316-amino-acid chain: Ribosomal RNA small subunit methyltransferase H (316 aa).

S-adenosyl-L-methionine-binding positions include 35–37 (GGH), aspartate 55, phenylalanine 79, aspartate 101, and glutamine 108.

It belongs to the methyltransferase superfamily. RsmH family.

It is found in the cytoplasm. It catalyses the reaction cytidine(1402) in 16S rRNA + S-adenosyl-L-methionine = N(4)-methylcytidine(1402) in 16S rRNA + S-adenosyl-L-homocysteine + H(+). Specifically methylates the N4 position of cytidine in position 1402 (C1402) of 16S rRNA. The sequence is that of Ribosomal RNA small subunit methyltransferase H from Aliivibrio salmonicida (strain LFI1238) (Vibrio salmonicida (strain LFI1238)).